The sequence spans 277 residues: Nickel import ATP-binding protein NikE (277 aa).

Residues 14-253 enclose the ABC transporter domain; it reads YRTVSLVGRS…EHPASRALQR (240 aa). 46–53 contacts ATP; sequence GRSGSGKS.

This sequence belongs to the ABC transporter superfamily. Nickel importer (TC 3.A.1.5.3) family. As to quaternary structure, the complex is composed of two ATP-binding proteins (NikD and NikE), two transmembrane proteins (NikB and NikC) and a solute-binding protein (NikA).

Its subcellular location is the cell inner membrane. The enzyme catalyses Ni(2+)(out) + ATP + H2O = Ni(2+)(in) + ADP + phosphate + H(+). In terms of biological role, part of the ABC transporter complex NikABCDE involved in nickel import. Responsible for energy coupling to the transport system. The protein is Nickel import ATP-binding protein NikE of Rhodospirillum rubrum (strain ATCC 11170 / ATH 1.1.1 / DSM 467 / LMG 4362 / NCIMB 8255 / S1).